Reading from the N-terminus, the 570-residue chain is Hydroxylamine reductase (570 aa).

Residues cysteine 5, cysteine 8, cysteine 17, and cysteine 23 each contribute to the [4Fe-4S] cluster site. Positions 266, 290, 334, 425, 453, 478, 513, and 515 each coordinate hybrid [4Fe-2O-2S] cluster. Cysteine 425 carries the cysteine persulfide modification.

Belongs to the HCP family. Requires [4Fe-4S] cluster as cofactor. The cofactor is hybrid [4Fe-2O-2S] cluster.

It is found in the cytoplasm. It catalyses the reaction A + NH4(+) + H2O = hydroxylamine + AH2 + H(+). Its function is as follows. Catalyzes the reduction of hydroxylamine to form NH(3) and H(2)O. This is Hydroxylamine reductase from Clostridium botulinum (strain ATCC 19397 / Type A).